The primary structure comprises 300 residues: NADH-cytochrome b5 reductase 2 (300 aa).

The chain crosses the membrane as a helical span at residues 12–29 (FVYPLVGATIGSIGLAYY). One can recognise an FAD-binding FR-type domain in the interval 49–153 (DQWIDLKLKK…KGPVVKWKWE (105 aa)). 156 to 191 (QFKSIALIGGGTGITPLYQLLREITSNPEDKTKVSL) is a binding site for FAD.

It belongs to the flavoprotein pyridine nucleotide cytochrome reductase family. FAD serves as cofactor.

It localises to the mitochondrion outer membrane. The enzyme catalyses 2 Fe(III)-[cytochrome b5] + NADH = 2 Fe(II)-[cytochrome b5] + NAD(+) + H(+). May mediate the reduction of outer membrane cytochrome b5. The sequence is that of NADH-cytochrome b5 reductase 2 (MCR1) from Lodderomyces elongisporus (strain ATCC 11503 / CBS 2605 / JCM 1781 / NBRC 1676 / NRRL YB-4239) (Yeast).